The chain runs to 470 residues: Zinc finger protein pat-9 (470 aa).

The interval 1–25 (MENRTPMQHHSGYEIVKSEPPSTPK) is disordered. 3 consecutive C2H2-type zinc fingers follow at residues 84–106 (YPCNLCSSKFGSKMELEEHQNSH), 112–134 (FECDTCNARFNRRSTLWNHKRIH), and 140–162 (FVCTVCQMTFKWKNSLKCHKDMH). The segment at 191 to 235 (MEQEENGGLPASSSASSVISHPLITTTSGNKKRSKAAKAKQTPSS) is disordered. The Nuclear localization signal motif lies at 221–230 (KKRSKAAKAK).

It belongs to the krueppel C2H2-type zinc-finger protein family. As to expression, expressed in body wall muscle and gonad (at protein level).

The protein resides in the nucleus. Its subcellular location is the chromosome. In terms of biological role, probable transcription factor; required for proper organization of muscle myofilaments and for their recruitment to the M line. This is Zinc finger protein pat-9 from Caenorhabditis elegans.